We begin with the raw amino-acid sequence, 174 residues long: Keratin-associated protein 9-2 (174 aa).

17 repeat units span residues 8 to 12 (CCQPT), 13 to 17 (CCRTT), 18 to 22 (CCRTT), 37 to 41 (CCQPA), 42 to 46 (CCVSS), 51 to 55 (CCRPT), 61 to 65 (CCRTT), 66 to 70 (CCQPT), 75 to 79 (CCQPS), 80 to 84 (CCSTP), 85 to 89 (CCQPT), 90 to 94 (CCGSS), 95 to 99 (CCGQT), 144 to 148 (CCRPA), 149 to 153 (CCETT), 154 to 158 (CCRTT), and 168 to 172 (CCQPS). Residues 8–172 (CCQPTCCRTT…TCVSSCCQPS (165 aa)) form a 17 X 5 AA repeats of C-C-[RQVSGE]-[SPTQ]-[TASP] region.

This sequence belongs to the KRTAP type 9 family. In terms of assembly, interacts with hair keratins.

Its function is as follows. In the hair cortex, hair keratin intermediate filaments are embedded in an interfilamentous matrix, consisting of hair keratin-associated proteins (KRTAP), which are essential for the formation of a rigid and resistant hair shaft through their extensive disulfide bond cross-linking with abundant cysteine residues of hair keratins. The matrix proteins include the high-sulfur and high-glycine-tyrosine keratins. This chain is Keratin-associated protein 9-2 (KRTAP9-2), found in Homo sapiens (Human).